We begin with the raw amino-acid sequence, 154 residues long: Crossover junction endodeoxyribonuclease RuvC (154 aa).

Catalysis depends on residues Asp-7, Glu-67, and Asp-139. Mg(2+) is bound by residues Asp-7, Glu-67, and Asp-139.

It belongs to the RuvC family. In terms of assembly, homodimer which binds Holliday junction (HJ) DNA. The HJ becomes 2-fold symmetrical on binding to RuvC with unstacked arms; it has a different conformation from HJ DNA in complex with RuvA. In the full resolvosome a probable DNA-RuvA(4)-RuvB(12)-RuvC(2) complex forms which resolves the HJ. Mg(2+) is required as a cofactor.

The protein resides in the cytoplasm. It carries out the reaction Endonucleolytic cleavage at a junction such as a reciprocal single-stranded crossover between two homologous DNA duplexes (Holliday junction).. Its function is as follows. The RuvA-RuvB-RuvC complex processes Holliday junction (HJ) DNA during genetic recombination and DNA repair. Endonuclease that resolves HJ intermediates. Cleaves cruciform DNA by making single-stranded nicks across the HJ at symmetrical positions within the homologous arms, yielding a 5'-phosphate and a 3'-hydroxyl group; requires a central core of homology in the junction. The consensus cleavage sequence is 5'-(A/T)TT(C/G)-3'. Cleavage occurs on the 3'-side of the TT dinucleotide at the point of strand exchange. HJ branch migration catalyzed by RuvA-RuvB allows RuvC to scan DNA until it finds its consensus sequence, where it cleaves and resolves the cruciform DNA. In Prochlorococcus marinus (strain MIT 9313), this protein is Crossover junction endodeoxyribonuclease RuvC.